A 127-amino-acid chain; its full sequence is Small ribosomal subunit protein uS11 (127 aa).

It belongs to the universal ribosomal protein uS11 family. As to quaternary structure, part of the 30S ribosomal subunit. Interacts with proteins S7 and S18. Binds to IF-3.

Located on the platform of the 30S subunit, it bridges several disparate RNA helices of the 16S rRNA. Forms part of the Shine-Dalgarno cleft in the 70S ribosome. The chain is Small ribosomal subunit protein uS11 from Streptococcus mutans serotype c (strain ATCC 700610 / UA159).